The chain runs to 386 residues: Putative prophage major tail sheath protein (386 aa).

The protein belongs to the myoviridae tail sheath protein family.

It is found in the secreted. The sequence is that of Putative prophage major tail sheath protein from Pseudomonas aeruginosa (strain UCBPP-PA14).